The following is a 200-amino-acid chain: MEKFSTHTGIGVPLRQSNVDTDQIIPAVYLKRITRTGFEDALFAAWRKDPAFILNQEPFNAGSVLVAGPDFGTGSSREHAVWALKDFGFKTVLSSRFADIFRGNSGKQGLLAAEVAQDDIELIWKVLENAPGTEVTVDLVSKTVMCGNVVAPFEIDDYTRWRLLEGLDDIGLTLQHEEDITAYEATRPAFKPKTLPARLS.

This sequence belongs to the LeuD family. LeuD type 1 subfamily. In terms of assembly, heterodimer of LeuC and LeuD.

The catalysed reaction is (2R,3S)-3-isopropylmalate = (2S)-2-isopropylmalate. The protein operates within amino-acid biosynthesis; L-leucine biosynthesis; L-leucine from 3-methyl-2-oxobutanoate: step 2/4. Functionally, catalyzes the isomerization between 2-isopropylmalate and 3-isopropylmalate, via the formation of 2-isopropylmaleate. In Arthrobacter sp. (strain FB24), this protein is 3-isopropylmalate dehydratase small subunit.